We begin with the raw amino-acid sequence, 215 residues long: uncharacterized protein (215 aa).

The S-adenosyl-L-methionine site is built by Gly53, Glu74, and Asp97.

It belongs to the methyltransferase superfamily. YrrT family.

In terms of biological role, could be a S-adenosyl-L-methionine-dependent methyltransferase. This is an uncharacterized protein from Geobacillus thermodenitrificans (strain NG80-2).